The chain runs to 129 residues: Ribosome-binding factor A (129 aa).

The protein belongs to the RbfA family. As to quaternary structure, monomer. Binds 30S ribosomal subunits, but not 50S ribosomal subunits or 70S ribosomes.

The protein localises to the cytoplasm. One of several proteins that assist in the late maturation steps of the functional core of the 30S ribosomal subunit. Associates with free 30S ribosomal subunits (but not with 30S subunits that are part of 70S ribosomes or polysomes). Required for efficient processing of 16S rRNA. May interact with the 5'-terminal helix region of 16S rRNA. The protein is Ribosome-binding factor A of Marinomonas sp. (strain MWYL1).